The sequence spans 346 residues: Ribonucleoside-diphosphate reductase subunit beta (346 aa).

Positions 89, 120, and 123 each coordinate Fe cation. Tyrosine 129 is an active-site residue. 3 residues coordinate Fe cation: glutamate 193, glutamate 227, and histidine 230.

It belongs to the ribonucleoside diphosphate reductase small chain family. In terms of assembly, tetramer of two alpha and two beta subunits. Fe cation serves as cofactor.

It catalyses the reaction a 2'-deoxyribonucleoside 5'-diphosphate + [thioredoxin]-disulfide + H2O = a ribonucleoside 5'-diphosphate + [thioredoxin]-dithiol. Provides the precursors necessary for DNA synthesis. Catalyzes the biosynthesis of deoxyribonucleotides from the corresponding ribonucleotides. In Chlamydia trachomatis serovar D (strain ATCC VR-885 / DSM 19411 / UW-3/Cx), this protein is Ribonucleoside-diphosphate reductase subunit beta (nrdB).